Reading from the N-terminus, the 215-residue chain is Ribonuclease T (215 aa).

The Exonuclease domain maps to 20 to 194 (VVIDVETAGF…YDTERTAVLF (175 aa)). The Mg(2+) site is built by D23, E25, H181, and D186. H181 (proton donor/acceptor) is an active-site residue.

This sequence belongs to the RNase T family. As to quaternary structure, homodimer. Mg(2+) serves as cofactor.

Trims short 3' overhangs of a variety of RNA species, leaving a one or two nucleotide 3' overhang. Responsible for the end-turnover of tRNA: specifically removes the terminal AMP residue from uncharged tRNA (tRNA-C-C-A). Also appears to be involved in tRNA biosynthesis. The chain is Ribonuclease T from Shigella dysenteriae serotype 1 (strain Sd197).